We begin with the raw amino-acid sequence, 237 residues long: Ras-related protein Rab-33A (237 aa).

Asn-46, Val-47, Gly-48, Lys-49, Thr-50, Cys-51, Thr-65, and Thr-68 together coordinate GTP. Residue Thr-50 participates in Mg(2+) binding. The short motif at 59-71 (GTFPDKTEATIGV) is the Switch 1 element. Mg(2+)-binding residues include Thr-68 and Asp-91. The Switch 2 signature appears at 92 to 111 (TAGQERFRKSMVEHYYRNVH). GTP-binding residues include Gly-94, Asn-151, Lys-152, Asp-154, Ala-182, and Lys-183. Residues Cys-235 and Cys-237 are each lipidated (S-geranylgeranyl cysteine). Cys-237 is subject to Cysteine methyl ester.

The protein belongs to the small GTPase superfamily. Rab family. Interacts with ATG16L1; the interaction is important for autophagosome formation. The cofactor is Mg(2+). In terms of tissue distribution, expressed predominantly in brain. Weak expression in ovary.

It localises to the cell membrane. It carries out the reaction GTP + H2O = GDP + phosphate + H(+). With respect to regulation, regulated by guanine nucleotide exchange factors (GEFs) which promote the exchange of bound GDP for free GTP. Regulated by GTPase activating proteins (GAPs) which increase the GTP hydrolysis activity. Inhibited by GDP dissociation inhibitors (GDIs). Its function is as follows. The small GTPases Rab are key regulators of intracellular membrane trafficking, from the formation of transport vesicles to their fusion with membranes. Rabs cycle between an inactive GDP-bound form and an active GTP-bound form that is able to recruit to membranes different sets of downstream effectors directly responsible for vesicle formation, movement, tethering and fusion. Modulates autophagosome formation through interaction with ATG16L1. In Mus musculus (Mouse), this protein is Ras-related protein Rab-33A.